The primary structure comprises 507 residues: Proton-coupled zinc antiporter SLC30A1 (507 aa).

Residues 1–10 (MGCWGRNRGR) are Cytoplasmic-facing. The helical transmembrane segment at 11–31 (LLCMLLLTFMFMVLEVVVSRV) threads the bilayer. At 32-35 (TASL) the chain is on the extracellular side. Residues 36 to 56 (AMLSDSFHMLSDVLALVVALV) traverse the membrane as a helical segment. Zn(2+) is bound by residues H43 and D47. Topologically, residues 57 to 78 (AERFARRTHATQKNTFGWIRAE) are cytoplasmic. Residues 79 to 99 (VMGALVNAIFLTGLCFAILLE) form a helical membrane-spanning segment. Residues 100-113 (AVERFIEPHEMQQP) lie on the Extracellular side of the membrane. A helical membrane pass occupies residues 114 to 134 (LVVLSVGVAGLLVNVLGLCLF). The Cytoplasmic portion of the chain corresponds to 135–247 (HHHSGEGQGA…RAGQLNMRGV (113 aa)). The disordered stretch occupies residues 140 to 218 (EGQGAGHGHS…EKLRSDDPVD (79 aa)). Residues 145–156 (GHGHSHGHGHGH) are 6 X 2 AA approximate repeats of H-G. The segment covering 147–165 (GHSHGHGHGHLAKGARKAG) has biased composition (basic residues). Positions 188–200 (TNTLVANTSNSNG) are enriched in polar residues. Over residues 204 to 215 (DQAEPEKLRSDD) the composition is skewed to basic and acidic residues. The helical transmembrane segment at 248 to 268 (FLHVLGDALGSVIVVVNALVF) threads the bilayer. The Zn(2+) site is built by H250 and D254. Residues 269-307 (YFSWKGCTEDDFCVNPCFPDPCKSSVELMNSTQAPMHEA) lie on the Extracellular side of the membrane. N298 carries an N-linked (GlcNAc...) asparagine glycan. The helical transmembrane segment at 308–328 (GPCWVLYLDPTLCIIMVCILL) threads the bilayer. At 329 to 507 (YTTYPLLKES…VPNKQPESSL (179 aa)) the chain is on the cytoplasmic side. S506 carries the post-translational modification Phosphoserine.

The protein belongs to the cation diffusion facilitator (CDF) transporter (TC 2.A.4) family. SLC30A subfamily. As to quaternary structure, homodimer. Interacts with TMEM163. Interacts and forms a complex with TMC6 and TMC8; the interaction regulates zinc transport into the ER. In terms of tissue distribution, widely expressed. Detected in duodenum and jejunum but not in ileum and colon (at protein level). Expressed by neuroglial cells (at protein level).

The protein localises to the cell membrane. It is found in the basolateral cell membrane. It localises to the cytoplasmic vesicle membrane. The protein resides in the cytoplasm. Its subcellular location is the endoplasmic reticulum membrane. The protein localises to the golgi apparatus membrane. It is found in the nucleus membrane. It carries out the reaction Zn(2+)(in) + 2 H(+)(out) = Zn(2+)(out) + 2 H(+)(in). With respect to regulation, calcium-dependent. Functionally, zinc ion:proton antiporter that could function at the plasma membrane mediating zinc efflux from cells against its electrochemical gradient protecting them from intracellular zinc accumulation and toxicity. Alternatively, could prevent the transport to the plasma membrane of CACNB2, the L-type calcium channels regulatory subunit, through a yet to be defined mechanism. By modulating the expression of these channels at the plasma membrane, could prevent calcium and zinc influx into cells. By the same mechanism, could also prevent L-type calcium channels-mediated heavy metal influx into cells. In some cells, could also function as a zinc ion:proton antiporter mediating zinc entry into the lumen of cytoplasmic vesicles. In macrophages, can increase zinc ions concentration into the lumen of cytoplasmic vesicles containing engulfed bacteria and could help inactivate them. Forms a complex with TMC6/EVER1 and TMC8/EVER2 at the ER membrane of keratynocytes which facilitates zinc uptake into the ER. Down-regulates the activity of transcription factors induced by zinc and cytokines. In Rattus norvegicus (Rat), this protein is Proton-coupled zinc antiporter SLC30A1.